Consider the following 141-residue polypeptide: Putative lipoprotein Tanf_09445 (141 aa).

The signal sequence occupies residues 1–20 (MKQKIILWIGALLLLTAGTG). Cys-21 carries N-palmitoyl cysteine lipidation. The S-diacylglycerol cysteine moiety is linked to residue Cys-21.

It is found in the cell membrane. The polypeptide is Putative lipoprotein Tanf_09445 (Tannerella forsythia (strain ATCC 43037 / JCM 10827 / CCUG 21028 A / KCTC 5666 / FDC 338) (Bacteroides forsythus)).